A 380-amino-acid chain; its full sequence is MAAPLRKEHPIFRILNSTFVDLPLPSNLSIWWNSGSLLGLCLVVQILTGIFLAMHYTADITLAFSSVMHILRDVNYGWFLRYVHANGVSLFFICMYCHIGRGLYYGSYNKIETWNVGVILFLVTILTAFMGYVLVWGQMSFWAATVITNLVSAIPYIGTIIVQWLWGGFSVDNATLTRFFPFHFLFPFIIAALAVIHLVFLHNSGANNPFAFNSNYDKAPFHIYFTTKDTVGFILLVAALFSLALLFPGALNDPENFIPANPLVTPPHIQPEWYFLFAYAILRSIPNKLGGVIALVAAILVLFLMPLLNTSKNESNSFRPLSQAAFWLLVAHLFILTWIGSQPVEYPYVLLGQVASVLYFSLFIFGFPIVSSIENKIIFS.

4 helical membrane-spanning segments follow: residues 34 to 54 (SGSLLGLCLVVQILTGIFLAM), 78 to 99 (WFLRYVHANGVSLFFICMYCHI), 114 to 134 (WNVGVILFLVTILTAFMGYVL), and 179 to 199 (FFPFHFLFPFIIAALAVIHLV). The heme b site is built by histidine 84 and histidine 98. 2 residues coordinate heme b: histidine 183 and histidine 197. Histidine 202 serves as a coordination point for a ubiquinone. Transmembrane regions (helical) follow at residues 227–247 (TKDTVGFILLVAALFSLALLF), 289–309 (LGGVIALVAAILVLFLMPLLN), 321–341 (LSQAAFWLLVAHLFILTWIGS), and 348–369 (YVLLGQVASVLYFSLFIFGFPI).

Belongs to the cytochrome b family. The main subunits of complex b-c1 are: cytochrome b, cytochrome c1 and the Rieske protein. It depends on heme b as a cofactor.

The protein localises to the mitochondrion inner membrane. In terms of biological role, component of the ubiquinol-cytochrome c reductase complex (complex III or cytochrome b-c1 complex) that is part of the mitochondrial respiratory chain. The b-c1 complex mediates electron transfer from ubiquinol to cytochrome c. Contributes to the generation of a proton gradient across the mitochondrial membrane that is then used for ATP synthesis. This Strongylocentrotus purpuratus (Purple sea urchin) protein is Cytochrome b (MT-CYB).